The primary structure comprises 103 residues: Large ribosomal subunit protein bL21 (103 aa).

Belongs to the bacterial ribosomal protein bL21 family. In terms of assembly, part of the 50S ribosomal subunit. Contacts protein L20.

Functionally, this protein binds to 23S rRNA in the presence of protein L20. The protein is Large ribosomal subunit protein bL21 of Desulfitobacterium hafniense (strain DSM 10664 / DCB-2).